We begin with the raw amino-acid sequence, 299 residues long: Acetylglutamate kinase (299 aa).

Substrate contacts are provided by residues 70 to 71 (GG), R92, and N186.

This sequence belongs to the acetylglutamate kinase family. ArgB subfamily.

It is found in the cytoplasm. The enzyme catalyses N-acetyl-L-glutamate + ATP = N-acetyl-L-glutamyl 5-phosphate + ADP. The protein operates within amino-acid biosynthesis; L-arginine biosynthesis; N(2)-acetyl-L-ornithine from L-glutamate: step 2/4. In terms of biological role, catalyzes the ATP-dependent phosphorylation of N-acetyl-L-glutamate. The protein is Acetylglutamate kinase of Caldanaerobacter subterraneus subsp. tengcongensis (strain DSM 15242 / JCM 11007 / NBRC 100824 / MB4) (Thermoanaerobacter tengcongensis).